Here is a 65-residue protein sequence, read N- to C-terminus: Large ribosomal subunit protein uL29 (65 aa).

It belongs to the universal ribosomal protein uL29 family.

This chain is Large ribosomal subunit protein uL29, found in Buchnera aphidicola subsp. Acyrthosiphon pisum (strain 5A).